Reading from the N-terminus, the 169-residue chain is Peptide methionine sulfoxide reductase MsrA (169 aa).

Cys-10 is an active-site residue.

Belongs to the MsrA Met sulfoxide reductase family.

It catalyses the reaction L-methionyl-[protein] + [thioredoxin]-disulfide + H2O = L-methionyl-(S)-S-oxide-[protein] + [thioredoxin]-dithiol. The catalysed reaction is [thioredoxin]-disulfide + L-methionine + H2O = L-methionine (S)-S-oxide + [thioredoxin]-dithiol. Its function is as follows. Has an important function as a repair enzyme for proteins that have been inactivated by oxidation. Catalyzes the reversible oxidation-reduction of methionine sulfoxide in proteins to methionine. The sequence is that of Peptide methionine sulfoxide reductase MsrA from Streptococcus mutans serotype c (strain ATCC 700610 / UA159).